A 426-amino-acid polypeptide reads, in one-letter code: MDRLHIIGGSPLSGRIPVSGAKNSALKLMVACLLTDQPIEFTNMPNLADTRFLAQLLETLGVEVYWPRGSSTCHLNAAELKSTIAPYEQVRKMRASFNVLGPLVARSGHATVSLPGGCAIGARPVDLHLQALEAMGADLRVEQGYVKAAAIHGLKGAHINFSTVSVGATEHTMLAATLAKGETILENAAREPEIEDLAHCLNQMGAQITGAGTPIIRIKGVEALKGTTYSVMPDRIEAGTFAMAAAAAGGDVTLDGAPVAALGAMIAKLREAGVTVDADEAASTIRIRRNGTPLKAVSLSTQPHPGFPTDLQAQFMALMTLASGTSIIRETIFENRFMHAPELARLGADITVRGQEAVVKGVAQLTAAPVMATDLRASVSLVIAGLAAQGETVVNRIYHLDRGFERLEEKLGACGARIERRSGEEE.

A phosphoenolpyruvate-binding site is contributed by 22-23 (KN). A UDP-N-acetyl-alpha-D-glucosamine-binding site is contributed by arginine 94. Cysteine 118 (proton donor) is an active-site residue. Cysteine 118 carries the post-translational modification 2-(S-cysteinyl)pyruvic acid O-phosphothioketal. UDP-N-acetyl-alpha-D-glucosamine contacts are provided by residues 123-127 (RPVDL), aspartate 310, and isoleucine 332.

The protein belongs to the EPSP synthase family. MurA subfamily.

Its subcellular location is the cytoplasm. It carries out the reaction phosphoenolpyruvate + UDP-N-acetyl-alpha-D-glucosamine = UDP-N-acetyl-3-O-(1-carboxyvinyl)-alpha-D-glucosamine + phosphate. It functions in the pathway cell wall biogenesis; peptidoglycan biosynthesis. In terms of biological role, cell wall formation. Adds enolpyruvyl to UDP-N-acetylglucosamine. The sequence is that of UDP-N-acetylglucosamine 1-carboxyvinyltransferase from Hyphomonas neptunium (strain ATCC 15444).